We begin with the raw amino-acid sequence, 317 residues long: Carbamate kinase (317 aa).

This sequence belongs to the carbamate kinase family. Homodimer.

It carries out the reaction hydrogencarbonate + NH4(+) + ATP = carbamoyl phosphate + ADP + H2O + H(+). It participates in metabolic intermediate metabolism; carbamoyl phosphate degradation; CO(2) and NH(3) from carbamoyl phosphate: step 1/1. This Giardia intestinalis (Giardia lamblia) protein is Carbamate kinase (CBK).